Here is a 732-residue protein sequence, read N- to C-terminus: Acylamino-acid-releasing enzyme (732 aa).

M1 is modified (N-acetylmethionine). Phosphoserine is present on residues S185 and S187. Catalysis depends on charge relay system residues S587, D675, and H707.

It belongs to the peptidase S9C family. As to quaternary structure, homotetramer.

The protein localises to the cytoplasm. It carries out the reaction Cleavage of an N-acetyl or N-formyl amino acid from the N-terminus of a polypeptide.. Homotetramerization is required for activity. Tetramerization results in the formation of a gated channel which is involved in substrate selection and substrate access to the catalytic sites. This enzyme catalyzes the hydrolysis of the N-terminal peptide bond of an N-acetylated peptide to generate an N-acetylated amino acid and a peptide with a free N-terminus. It preferentially cleaves off Ac-Ala, Ac-Met and Ac-Ser. Also, involved in the degradation of oxidized and glycated proteins. This is Acylamino-acid-releasing enzyme (Apeh) from Mus musculus (Mouse).